A 1585-amino-acid polypeptide reads, in one-letter code: uncharacterized protein (1585 aa).

Positions 12–59 (DKISRKLRMIQGNAERLKRAANGPLIFEAEDRTERVMRQIDRSANRLT) form a coiled coil. Disordered regions lie at residues 586-627 (PKRT…SLPR) and 645-692 (IRRR…NPTR). The span at 618 to 627 (TATGPTSLPR) shows a compositional bias: polar residues. Basic residues predominate over residues 645–655 (IRRRRGKRVLG). Residues 661-672 (NRMNPSDSSIAV) show a composition bias toward polar residues. Phosphoserine occurs at positions 970 and 972.

The protein to B.subtilis XkdO.

This is an uncharacterized protein from Bacillus subtilis (strain 168).